The following is a 507-amino-acid chain: ATP synthase subunit beta (507 aa).

The disordered stretch occupies residues 1 to 22 (MSGLASKAKSRVKSSKGKNSTN). Residue 183-190 (GGAGVGKT) participates in ATP binding.

This sequence belongs to the ATPase alpha/beta chains family. In terms of assembly, F-type ATPases have 2 components, CF(1) - the catalytic core - and CF(0) - the membrane proton channel. CF(1) has five subunits: alpha(3), beta(3), gamma(1), delta(1), epsilon(1). CF(0) has three main subunits: a(1), b(2) and c(9-12). The alpha and beta chains form an alternating ring which encloses part of the gamma chain. CF(1) is attached to CF(0) by a central stalk formed by the gamma and epsilon chains, while a peripheral stalk is formed by the delta and b chains.

The protein localises to the cell inner membrane. The catalysed reaction is ATP + H2O + 4 H(+)(in) = ADP + phosphate + 5 H(+)(out). Its function is as follows. Produces ATP from ADP in the presence of a proton gradient across the membrane. The catalytic sites are hosted primarily by the beta subunits. This is ATP synthase subunit beta from Ehrlichia chaffeensis (strain ATCC CRL-10679 / Arkansas).